A 460-amino-acid chain; its full sequence is Kynurenine 3-monooxygenase (460 aa).

The protein belongs to the aromatic-ring hydroxylase family. KMO subfamily. FAD is required as a cofactor.

Its subcellular location is the mitochondrion. It carries out the reaction L-kynurenine + NADPH + O2 + H(+) = 3-hydroxy-L-kynurenine + NADP(+) + H2O. It functions in the pathway cofactor biosynthesis; NAD(+) biosynthesis; quinolinate from L-kynurenine: step 1/3. In terms of biological role, catalyzes the hydroxylation of L-kynurenine (L-Kyn) to form 3-hydroxy-L-kynurenine (L-3OHKyn). Required for synthesis of quinolinic acid. The protein is Kynurenine 3-monooxygenase of Dictyostelium discoideum (Social amoeba).